Consider the following 89-residue polypeptide: Bacterial microcompartment shell vertex protein GrpN (89 aa).

In terms of domain architecture, BMV spans 1-83 (MYLGKVIGTV…IDAAVVGIVD (83 aa)).

It belongs to the CcmL/EutN family. As to quaternary structure, homopentamer with a small central pore.

The protein resides in the bacterial microcompartment. Functionally, probably forms vertices in the bacterial microcompartment (BMC) predicted to be involved in glycyl radical-based 1,2-propanediol metabolism in this organism. This chain is Bacterial microcompartment shell vertex protein GrpN, found in Rhodospirillum rubrum (strain F11).